The following is a 208-amino-acid chain: Small ribosomal subunit protein uS4 (208 aa).

The region spanning 97–160 is the S4 RNA-binding domain; sequence SRLDNIVFRL…KKNDKIAEAL (64 aa).

This sequence belongs to the universal ribosomal protein uS4 family. Part of the 30S ribosomal subunit. Contacts protein S5. The interaction surface between S4 and S5 is involved in control of translational fidelity.

Functionally, one of the primary rRNA binding proteins, it binds directly to 16S rRNA where it nucleates assembly of the body of the 30S subunit. Its function is as follows. With S5 and S12 plays an important role in translational accuracy. The sequence is that of Small ribosomal subunit protein uS4 from Mesoplasma florum (strain ATCC 33453 / NBRC 100688 / NCTC 11704 / L1) (Acholeplasma florum).